The chain runs to 351 residues: Beta-hexosaminidase (351 aa).

Residues aspartate 62, arginine 70, arginine 134, and 164 to 165 (KH) each bind substrate. Residue histidine 177 is the Proton donor/acceptor of the active site. Aspartate 249 functions as the Nucleophile in the catalytic mechanism.

Belongs to the glycosyl hydrolase 3 family. NagZ subfamily.

The protein resides in the cytoplasm. The catalysed reaction is Hydrolysis of terminal non-reducing N-acetyl-D-hexosamine residues in N-acetyl-beta-D-hexosaminides.. It participates in cell wall biogenesis; peptidoglycan recycling. In terms of biological role, plays a role in peptidoglycan recycling by cleaving the terminal beta-1,4-linked N-acetylglucosamine (GlcNAc) from peptide-linked peptidoglycan fragments, giving rise to free GlcNAc, anhydro-N-acetylmuramic acid and anhydro-N-acetylmuramic acid-linked peptides. This Histophilus somni (strain 129Pt) (Haemophilus somnus) protein is Beta-hexosaminidase.